Reading from the N-terminus, the 793-residue chain is PC3-like endoprotease variant A (793 aa).

Residues 1 to 29 (MNYRGIYRRRYVFVLLLLVAVVNISYGWT) form the signal peptide. Positions 30-152 (VLKNKDYKRR…QQKILERVKR (123 aa)) are excised as a propeptide. Asparagine 62 and asparagine 190 each carry an N-linked (GlcNAc...) asparagine glycan. The Peptidase S8 domain maps to 164-486 (MWYLLNTGQA…FGRLDANAMV (323 aa)). Catalysis depends on charge relay system residues aspartate 202 and histidine 242. Cystine bridges form between cysteine 259–cysteine 411 and cysteine 351–cysteine 381. Serine 419 serves as the catalytic Charge relay system. In terms of domain architecture, P/Homo B spans 495–638 (LPAQRKCTAA…EERVIDTQTK (144 aa)). A disulfide bridge links cysteine 501 with cysteine 527.

It belongs to the peptidase S8 family. Furin subfamily. Predominantly in the body column.

Functionally, probably involved in the processing of hormone and other protein precursors at sites comprised of pairs of basic amino acid residues. The sequence is that of PC3-like endoprotease variant A from Hydra vulgaris (Hydra).